Consider the following 610-residue polypeptide: Glutamine--fructose-6-phosphate aminotransferase [isomerizing] (610 aa).

The Nucleophile; for GATase activity role is filled by Cys2. The region spanning 2–218 (CGIVGAVAQR…EGDVAEITRH (217 aa)) is the Glutamine amidotransferase type-2 domain. 2 consecutive SIS domains span residues 286–426 (AADI…LKGR) and 459–600 (LSED…VDQP). Lys605 serves as the catalytic For Fru-6P isomerization activity.

In terms of assembly, homodimer.

The protein localises to the cytoplasm. The catalysed reaction is D-fructose 6-phosphate + L-glutamine = D-glucosamine 6-phosphate + L-glutamate. Functionally, catalyzes the first step in hexosamine metabolism, converting fructose-6P into glucosamine-6P using glutamine as a nitrogen source. This Haemophilus ducreyi (strain 35000HP / ATCC 700724) protein is Glutamine--fructose-6-phosphate aminotransferase [isomerizing].